The primary structure comprises 640 residues: Chaperone protein HtpG (640 aa).

Residues 1-348 (MADVAHQETH…SNDLPLNVSR (348 aa)) are a; substrate-binding. Residues 349-565 (EILQDNKITQ…GTGMSTQMIK (217 aa)) are b. The c stretch occupies residues 566–640 (LMQAAGQPVP…LNTLLMNLAK (75 aa)).

It belongs to the heat shock protein 90 family. As to quaternary structure, homodimer.

The protein resides in the cytoplasm. In terms of biological role, molecular chaperone. Has ATPase activity. This chain is Chaperone protein HtpG, found in Pseudoalteromonas atlantica (strain T6c / ATCC BAA-1087).